The sequence spans 301 residues: Pseudouridine-5'-phosphate glycosidase (301 aa).

Residue Glu-25 is the Proton donor of the active site. Residues Lys-86 and Val-106 each contribute to the substrate site. Asp-138 serves as a coordination point for Mn(2+). Residue 140–142 (SAD) coordinates substrate. Lys-159 functions as the Nucleophile in the catalytic mechanism.

Belongs to the pseudouridine-5'-phosphate glycosidase family. Homotrimer. It depends on Mn(2+) as a cofactor.

The catalysed reaction is D-ribose 5-phosphate + uracil = psi-UMP + H2O. Catalyzes the reversible cleavage of pseudouridine 5'-phosphate (PsiMP) to ribose 5-phosphate and uracil. Functions biologically in the cleavage direction, as part of a pseudouridine degradation pathway. The chain is Pseudouridine-5'-phosphate glycosidase from Geobacillus kaustophilus (strain HTA426).